Consider the following 1035-residue polypeptide: Translation initiation factor IF-2 (1035 aa).

A compositionally biased stretch (basic and acidic residues) spans 56 to 66 (KDDKSNTDDNK). 2 disordered regions span residues 56 to 80 (KDDK…SSEA) and 114 to 402 (ANDA…VIKN). Positions 68–78 (ASAHSVAQHSS) are enriched in polar residues. Basic and acidic residues-rich tracts occupy residues 114–137 (ANDA…RVET) and 146–200 (LVRE…EIKD). A compositionally biased stretch (polar residues) spans 219–228 (DSATNVNLNE). The span at 229 to 238 (SIDKDKKTND) shows a compositional bias: basic and acidic residues. Polar residues predominate over residues 239–253 (NRQVSTDNSAVNNEE). Residues 259–315 (LNKKDMDKKNNNKKNEAKKNAEKKNEAKKNEKNDNKGGNAKKNEHRSPDMKKNDSNR) show a composition bias toward basic and acidic residues. Residues 316–325 (PQDANKQNSK) show a composition bias toward polar residues. Basic and acidic residues-rich tracts occupy residues 327-347 (AADK…EIPK) and 354-385 (QKEE…KEQP). The region spanning 537–706 (PRPPVVVVMG…LLAADMLELK (170 aa)) is the tr-type G domain. Positions 546 to 553 (GHVDHGKT) are G1. 546–553 (GHVDHGKT) is a GTP binding site. Positions 571–575 (GITQH) are G2. Positions 592–595 (DTPG) are G3. Residues 592–596 (DTPGH) and 646–649 (NKID) contribute to the GTP site. The tract at residues 646–649 (NKID) is G4. The segment at 682 to 684 (SAK) is G5.

This sequence belongs to the TRAFAC class translation factor GTPase superfamily. Classic translation factor GTPase family. IF-2 subfamily.

It localises to the cytoplasm. In terms of biological role, one of the essential components for the initiation of protein synthesis. Protects formylmethionyl-tRNA from spontaneous hydrolysis and promotes its binding to the 30S ribosomal subunits. Also involved in the hydrolysis of GTP during the formation of the 70S ribosomal complex. This chain is Translation initiation factor IF-2, found in Acetivibrio thermocellus (strain ATCC 27405 / DSM 1237 / JCM 9322 / NBRC 103400 / NCIMB 10682 / NRRL B-4536 / VPI 7372) (Clostridium thermocellum).